A 112-amino-acid chain; its full sequence is Large ribosomal subunit protein uL1 (112 aa).

It belongs to the universal ribosomal protein uL1 family.

This Caenorhabditis remanei (Caenorhabditis vulgaris) protein is Large ribosomal subunit protein uL1 (rpl-10a).